The primary structure comprises 432 residues: Adenylosuccinate synthetase (432 aa).

GTP is bound by residues 13–19 (GDEGKGK) and 41–43 (GHT). Residue Asp-14 is the Proton acceptor of the active site. Mg(2+) contacts are provided by Asp-14 and Gly-41. Residues 14-17 (DEGK), 39-42 (NAGH), Thr-130, Arg-144, Gln-225, Thr-240, and Arg-304 each bind IMP. His-42 serves as the catalytic Proton donor. 300 to 306 (AVTGRPR) contributes to the substrate binding site. GTP contacts are provided by residues Arg-306, 332–334 (KLD), and 415–417 (STG).

It belongs to the adenylosuccinate synthetase family. In terms of assembly, homodimer. Requires Mg(2+) as cofactor.

The protein localises to the cytoplasm. It catalyses the reaction IMP + L-aspartate + GTP = N(6)-(1,2-dicarboxyethyl)-AMP + GDP + phosphate + 2 H(+). It functions in the pathway purine metabolism; AMP biosynthesis via de novo pathway; AMP from IMP: step 1/2. Its function is as follows. Plays an important role in the de novo pathway of purine nucleotide biosynthesis. Catalyzes the first committed step in the biosynthesis of AMP from IMP. The sequence is that of Adenylosuccinate synthetase from Actinobacillus succinogenes (strain ATCC 55618 / DSM 22257 / CCUG 43843 / 130Z).